Here is a 424-residue protein sequence, read N- to C-terminus: MEKFPAVTVFDLDYQGRGVAKIDGQVVFIEGALPDETVTFCKTSAKKQFIEAVVDEIIEPSPQRVAPRCPFYDRCGGCALQHWHSQEQLLGKQKLWLTQLQRLGGAQPEHVLLPLAGKEWRYRRRARLAVHYENDVIAVGFKAKRSHDVVAVNDCLILQEHLAAALPLLPDFLRALLPVKVDEILLTAGEKVAALTLRTKKRALSPAWGEKWANLAGAHWQLWENDRCLFGEPNDLYYQPISGVTLHFTPDDFIQVNASVNEALIQTVLAWLAPLEKSEVLDLFSGLGNFSLPLAYKGARVTAVEGVRAMVQRGAKMAAEQQLSSRLEMQCMDLFSVSAAQMKSWQSAKSWLLDPPRAGAHAVVQALPKKFPEKIVYVSCNPATLARDVAILQSKGFHLERGQVVNMFAHSAHIESVILMTRTI.

The 56-residue stretch at 1–56 (MEKFPAVTVFDLDYQGRGVAKIDGQVVFIEGALPDETVTFCKTSAKKQFIEAVVDE) folds into the TRAM domain. [4Fe-4S] cluster-binding residues include cysteine 69, cysteine 75, cysteine 78, and cysteine 155. Residues glutamine 255, phenylalanine 284, asparagine 289, glutamate 305, aspartate 333, and aspartate 354 each contribute to the S-adenosyl-L-methionine site. Cysteine 380 functions as the Nucleophile in the catalytic mechanism.

This sequence belongs to the class I-like SAM-binding methyltransferase superfamily. RNA M5U methyltransferase family. RlmD subfamily.

The enzyme catalyses uridine(1939) in 23S rRNA + S-adenosyl-L-methionine = 5-methyluridine(1939) in 23S rRNA + S-adenosyl-L-homocysteine + H(+). Functionally, catalyzes the formation of 5-methyl-uridine at position 1939 (m5U1939) in 23S rRNA. This is 23S rRNA (uracil(1939)-C(5))-methyltransferase RlmD from Dichelobacter nodosus (strain VCS1703A).